Consider the following 66-residue polypeptide: MEGISITKLLVIAVLIVLLFGTNKLRTLGSDLGAALKGFKKAMNDETPAAKKSDGAEAAPRVENKE.

Residues 1–21 form a helical membrane-spanning segment; it reads MEGISITKLLVIAVLIVLLFG. Residues 46–66 are disordered; sequence ETPAAKKSDGAEAAPRVENKE.

The protein belongs to the TatA/E family. TatE subfamily.

It localises to the cell inner membrane. In terms of biological role, part of the twin-arginine translocation (Tat) system that transports large folded proteins containing a characteristic twin-arginine motif in their signal peptide across membranes. TatE shares overlapping functions with TatA. This Edwardsiella piscicida protein is Probable Sec-independent protein translocase protein TatE.